We begin with the raw amino-acid sequence, 304 residues long: Insulin-like growth factor-binding protein 2 (304 aa).

Residues 1–34 form the signal peptide; that stretch reads MLPRLGGPALPLLLPSLLLLLLLGAGGCGPGVRA. Positions 36-118 constitute an IGFBP N-terminal domain; the sequence is VLFRCPPCTP…VTGAGTCEKR (83 aa). 9 disulfides stabilise this stretch: C40–C68, C43–C70, C51–C71, C59–C74, C82–C95, C89–C115, C206–C240, C251–C262, and C264–C285. Residues 203–285 form the Thyroglobulin type-1 domain; sequence RTPCQQELDQ…APTIRGDPEC (83 aa). The Cell attachment site motif lies at 280 to 282; the sequence is RGD.

In terms of assembly, interacts with IGF1. Interacts with IGF2. Interacts (via RGD motif) with integrin alpha5/ITGA5; this interaction induces cell migration, adhesion or apoptosis according to the context. Interacts with PTPRB; this interaction leads to PTPRB dimerization and inactivation. Post-translationally, cleaved by MMP9 leading to release of free IGF2 from IGFBP2-IGF2 complex, which contributes to enhance the motility and the growth of astrocytes. In terms of processing, O-glycosylated. In terms of tissue distribution, in adults, expressed in brain, testes, ovaries, and kidney. Expression in the adult liver is barely detectable.

It is found in the secreted. In terms of biological role, multifunctional protein that plays a critical role in regulating the availability of IGFs such as IGF1 and IGF2 to their receptors and thereby regulates IGF-mediated cellular processes including proliferation, differentiation, and apoptosis in a cell-type specific manner. Functions coordinately with receptor protein tyrosine phosphatase beta/PTPRB and the IGF1 receptor to regulate IGF1-mediated signaling by stimulating the phosphorylation of PTEN leading to its inactivation and AKT1 activation. Plays a positive role in cell migration via interaction with integrin alpha5/ITGA5 through an RGD motif. Additionally, interaction with ITGA5/ITGB1 enhances the adhesion of endothelial progenitor cells to endothelial cells. Upon mitochondrial damage, facilitates apoptosis with ITGA5 of podocytes, and then activates the phosphorylation of focal adhesion kinase (FAK)-mediated mitochondrial injury. The polypeptide is Insulin-like growth factor-binding protein 2 (Igfbp2) (Rattus norvegicus (Rat)).